Here is a 460-residue protein sequence, read N- to C-terminus: MSVKIFNSLTKQKEIFKPIESGKVKLYVCGMTVYDYMHIGHGRSWIIFDMVVRYLRMRGYEVTFVRNITDIDDKIIKRAGENKESPAALAERFIQILHEDEKALRVLSPDQEPRATQYVPEIIKLIQKLLDNQYAYTGQNGDVFFDVRRFKDYGKLSHRHLDELQAGARVEVSDSKRDPLDFVLWKKAKPGEPKWDSPWGEGRPGWHIECSAMSSSILGQPFDIHGGGLDLKFPHHENEIAQSEAGEEKPFVKLWMHAGLLEINKEKMSKSLGNIISIREALKESDVEVLRYFLLSGHYRNPLSYSKENLENGRLALERFYLALRGLPVVNHEKTSSYTDRFYEAMDDDFNTPIAFALLFEMVREINRFRDNNQIEKAAVLAAELKCLGNIFGLLQYSPEQFLQGAKKEADVQEIKKLIDQRNEARAKKDWKTADQIRDQLTDLGVAIEDSSDGTSWRQE.

Zn(2+) is bound at residue C29. A 'HIGH' region motif is present at residues 31-41 (MTVYDYMHIGH). Zn(2+) is bound by residues C210, H235, and E239. Positions 267–271 (KMSKS) match the 'KMSKS' region motif. K270 is an ATP binding site.

It belongs to the class-I aminoacyl-tRNA synthetase family. Monomer. Zn(2+) serves as cofactor.

The protein localises to the cytoplasm. The catalysed reaction is tRNA(Cys) + L-cysteine + ATP = L-cysteinyl-tRNA(Cys) + AMP + diphosphate. In Coxiella burnetii (strain RSA 493 / Nine Mile phase I), this protein is Cysteine--tRNA ligase.